A 451-amino-acid polypeptide reads, in one-letter code: Probable glycine dehydrogenase (decarboxylating) subunit 1 (451 aa).

It belongs to the GcvP family. N-terminal subunit subfamily. The glycine cleavage system is composed of four proteins: P, T, L and H. In this organism, the P 'protein' is a heterodimer of two subunits.

It carries out the reaction N(6)-[(R)-lipoyl]-L-lysyl-[glycine-cleavage complex H protein] + glycine + H(+) = N(6)-[(R)-S(8)-aminomethyldihydrolipoyl]-L-lysyl-[glycine-cleavage complex H protein] + CO2. Functionally, the glycine cleavage system catalyzes the degradation of glycine. The P protein binds the alpha-amino group of glycine through its pyridoxal phosphate cofactor; CO(2) is released and the remaining methylamine moiety is then transferred to the lipoamide cofactor of the H protein. The chain is Probable glycine dehydrogenase (decarboxylating) subunit 1 from Thioalkalivibrio sulfidiphilus (strain HL-EbGR7).